Consider the following 292-residue polypeptide: Small ribosomal subunit protein uS9m (292 aa).

The interval 273–292 (VERKKPGKRKARKMPTWVKR) is disordered.

Belongs to the universal ribosomal protein uS9 family.

Its subcellular location is the mitochondrion. This is Small ribosomal subunit protein uS9m (MRPS9) from Kluyveromyces marxianus (Yeast).